The sequence spans 456 residues: Anthocyanidin 3-O-galactosyltransferase F3GT1 (456 aa).

An anthocyanidin-binding residues include Ser-20, His-22, and Gln-83. Catalysis depends on His-22, which acts as the Proton acceptor. The active-site Charge relay is the Asp-118. Residue His-150 participates in an anthocyanidin binding. UDP contacts are provided by Ser-281, Trp-333, Ala-334, His-351, Asn-355, Ser-356, and Glu-359. Gly-374 is a binding site for an anthocyanidin.

This sequence belongs to the UDP-glycosyltransferase family. As to expression, expressed at low levels in stems and leaves. Expressed in ovaries.

It catalyses the reaction cyanidin + UDP-alpha-D-galactose = cyanidin 3-O-beta-D-galactoside + UDP + H(+). Its pathway is pigment biosynthesis; anthocyanin biosynthesis. Its function is as follows. Involved in anthocyanin biosynthesis by catalyzing the galactosylation of cyanidin. Required for the accumulation of anthocyanin in red-fleshed kiwifruit varieties. Seems to be the key enzyme regulating the accumulation of anthocyanin in red-fleshed kiwi fruits. This chain is Anthocyanidin 3-O-galactosyltransferase F3GT1, found in Actinidia chinensis var. chinensis (Chinese soft-hair kiwi).